A 402-amino-acid polypeptide reads, in one-letter code: 2,3-bisphosphoglycerate-independent phosphoglycerate mutase (402 aa).

The tract at residues 155–174 (SMVSDSDPHRENERPMEVRP) is disordered. The segment covering 160–174 (SDPHRENERPMEVRP) has biased composition (basic and acidic residues).

The protein belongs to the BPG-independent phosphoglycerate mutase family. A-PGAM subfamily.

It catalyses the reaction (2R)-2-phosphoglycerate = (2R)-3-phosphoglycerate. It functions in the pathway carbohydrate degradation; glycolysis; pyruvate from D-glyceraldehyde 3-phosphate: step 3/5. Its function is as follows. Catalyzes the interconversion of 2-phosphoglycerate and 3-phosphoglycerate. The polypeptide is 2,3-bisphosphoglycerate-independent phosphoglycerate mutase (Picrophilus torridus (strain ATCC 700027 / DSM 9790 / JCM 10055 / NBRC 100828 / KAW 2/3)).